The chain runs to 1838 residues: Lysine-specific demethylase 5 (1838 aa).

A disordered region spans residues Met1–Asn150. A compositionally biased stretch (gly residues) spans Ser15–Ser31. Low complexity predominate over residues Arg45–Ser56. Residues His136–Phe145 are compositionally biased toward polar residues. Residues Cys161–Pro202 enclose the JmjN domain. Residues Thr226 to Ser316 enclose the ARID domain. Low complexity predominate over residues Gly321–Pro333. Disordered regions lie at residues Gly321–Gly380 and Gly416–Glu437. At Thr323 the chain carries Phosphothreonine. Polar residues-rich tracts occupy residues Thr351–Thr361, Phe369–Gly380, and Gly416–Ala430. The PHD-type 1 zinc finger occupies Lys448–Glu498. Positions Glu591 to Ser757 constitute a JmjC domain. Fe cation-binding residues include His637, Asp640, and His725. A coiled-coil region spans residues Val960–Leu1049. A PHD-type 2 zinc finger spans residues Asp1293–Ser1354. Positions Ser1401–Asp1462 are disordered. The segment covering Ala1407–Gln1417 has biased composition (low complexity). Phosphoserine is present on residues Ser1422 and Ser1433. Positions Ser1453 to Asp1462 are enriched in acidic residues. Ser1474 is modified (phosphoserine). The interval Tyr1548–Asp1751 is disordered. Composition is skewed to low complexity over residues Asn1576–Gly1595, Gly1624–Asp1650, Ala1658–Thr1667, Ser1674–Ser1683, and Ser1692–Gly1736. A phosphoserine mark is found at Ser1635 and Ser1640. Residues Glu1753–Thr1808 form a PHD-type 3 zinc finger. A disordered region spans residues Gln1814–Arg1838.

Belongs to the JARID1 histone demethylase family. As to quaternary structure, interacts with Myc. Part of a complex containing Lid, Myc and Ash2. It depends on Fe(2+) as a cofactor.

The protein localises to the nucleus. It carries out the reaction N(6),N(6),N(6)-trimethyl-L-lysyl(4)-[histone H3] + 3 2-oxoglutarate + 3 O2 = L-lysyl(4)-[histone H3] + 3 formaldehyde + 3 succinate + 3 CO2. Inhibited by Myc. Its function is as follows. Histone demethylase that specifically demethylates 'Lys-4' of histone H3, thereby playing a central role in histone code. Does not demethylate histone H3 'Lys-9', H3 'Lys-27', H3 'Lys-36', H3 'Lys-79' or H4 'Lys-20'. Specifically demethylates trimethylated H3 'Lys-4'. Required for the correct regulation of homeotic genes during development. Plays a role in the regulation of the circadian rhythm and in maintaining the normal periodicity of the circadian clock. Regulates the expression of clock-controlled genes including tim, per and cry. The sequence is that of Lysine-specific demethylase 5 from Drosophila melanogaster (Fruit fly).